We begin with the raw amino-acid sequence, 292 residues long: Phosphatidylglycerol--prolipoprotein diacylglyceryl transferase (292 aa).

4 helical membrane-spanning segments follow: residues 18-38 (LFGATFALRWYALAYIAGLLI), 67-87 (LLTWVILGVILGGRLGFVLFY), 105-125 (GGMSFHGGFLGVMVAVIAFCL), and 129-149 (ISILPVADLLAAATPPGLFLG). Arginine 150 contributes to the a 1,2-diacyl-sn-glycero-3-phospho-(1'-sn-glycerol) binding site. The next 3 helical transmembrane spans lie at 193-213 (QLYEAALEGIVLFAILAILIW), 222-242 (GAVTGAFLAGYGCARFLVEFV), and 266-286 (GLTMGQILSLPMILLGLYFML).

It belongs to the Lgt family.

The protein localises to the cell inner membrane. The catalysed reaction is L-cysteinyl-[prolipoprotein] + a 1,2-diacyl-sn-glycero-3-phospho-(1'-sn-glycerol) = an S-1,2-diacyl-sn-glyceryl-L-cysteinyl-[prolipoprotein] + sn-glycerol 1-phosphate + H(+). It functions in the pathway protein modification; lipoprotein biosynthesis (diacylglyceryl transfer). Its function is as follows. Catalyzes the transfer of the diacylglyceryl group from phosphatidylglycerol to the sulfhydryl group of the N-terminal cysteine of a prolipoprotein, the first step in the formation of mature lipoproteins. The chain is Phosphatidylglycerol--prolipoprotein diacylglyceryl transferase from Cereibacter sphaeroides (strain ATCC 17025 / ATH 2.4.3) (Rhodobacter sphaeroides).